The following is a 213-amino-acid chain: Heat shock protein 30C (213 aa).

Positions 61–80 (SKDTEMRRITDQNRQSRESE) are enriched in basic and acidic residues. Disordered regions lie at residues 61 to 93 (SKDT…GKDH) and 174 to 213 (ALPP…QKVD). One can recognise a sHSP domain in the interval 76-188 (SRESEGTSPN…PETPIPISMD (113 aa)).

This sequence belongs to the small heat shock protein (HSP20) family.

The protein is Heat shock protein 30C (hsp30c) of Xenopus laevis (African clawed frog).